Here is a 239-residue protein sequence, read N- to C-terminus: tRNA (guanine-N(1)-)-methyltransferase (239 aa).

Residues Gly108 and 127–132 each bind S-adenosyl-L-methionine; that span reads LGDFVL.

This sequence belongs to the RNA methyltransferase TrmD family. As to quaternary structure, homodimer.

It localises to the cytoplasm. The enzyme catalyses guanosine(37) in tRNA + S-adenosyl-L-methionine = N(1)-methylguanosine(37) in tRNA + S-adenosyl-L-homocysteine + H(+). In terms of biological role, specifically methylates guanosine-37 in various tRNAs. The sequence is that of tRNA (guanine-N(1)-)-methyltransferase from Streptococcus thermophilus (strain ATCC BAA-250 / LMG 18311).